The sequence spans 481 residues: Glutamate--tRNA ligase (481 aa).

Positions 11–21 match the 'HIGH' region motif; the sequence is PSPTGLLHIGN. A 'KMSKS' region motif is present at residues 255–259; it reads KLSKR. Residue lysine 258 participates in ATP binding.

The protein belongs to the class-I aminoacyl-tRNA synthetase family. Glutamate--tRNA ligase type 1 subfamily. Monomer.

The protein localises to the cytoplasm. The enzyme catalyses tRNA(Glu) + L-glutamate + ATP = L-glutamyl-tRNA(Glu) + AMP + diphosphate. Catalyzes the attachment of glutamate to tRNA(Glu) in a two-step reaction: glutamate is first activated by ATP to form Glu-AMP and then transferred to the acceptor end of tRNA(Glu). This chain is Glutamate--tRNA ligase, found in Streptococcus pyogenes serotype M3 (strain ATCC BAA-595 / MGAS315).